Here is a 298-residue protein sequence, read N- to C-terminus: uncharacterized protein (298 aa).

Residues 264–298 (APPPPLPCITTGPAALEDSPKASKANKGKKAKAKK) are disordered. Positions 287–298 (KANKGKKAKAKK) are enriched in basic residues.

This is an uncharacterized protein from Mus musculus (Mouse).